The following is a 187-amino-acid chain: MAIGMSELKKGLKIELGGVPYRIVEYQHVKPGKGAAFVRAKIKSFLDGKVIEKTFHAGDKCEEPNLVEKTMQYLYHDGDTYQFMDIESYEQIALNDSQVGEASKWMLDGMQVQVLLHNDKAISVDVPQVVALKIVETAPNFKGDTSSASKKPATLETGAVVQVPFHVLEGEIIKVNTETEEYLEKVK.

This sequence belongs to the elongation factor P family.

The protein localises to the cytoplasm. Its pathway is protein biosynthesis; polypeptide chain elongation. Involved in peptide bond synthesis. Stimulates efficient translation and peptide-bond synthesis on native or reconstituted 70S ribosomes in vitro. Probably functions indirectly by altering the affinity of the ribosome for aminoacyl-tRNA, thus increasing their reactivity as acceptors for peptidyl transferase. In Helicobacter pylori (strain G27), this protein is Elongation factor P.